The sequence spans 460 residues: Phosphomethylpyrimidine synthase (460 aa).

Residues N80, M109, Y139, H175, 195–197 (SRG), 236–239 (DSLR), and E275 each bind substrate. H279 serves as a coordination point for Zn(2+). Y302 provides a ligand contact to substrate. H343 is a Zn(2+) binding site. C423, C426, and C431 together coordinate [4Fe-4S] cluster.

Belongs to the ThiC family. It depends on [4Fe-4S] cluster as a cofactor.

It catalyses the reaction 5-amino-1-(5-phospho-beta-D-ribosyl)imidazole + S-adenosyl-L-methionine = 4-amino-2-methyl-5-(phosphooxymethyl)pyrimidine + CO + 5'-deoxyadenosine + formate + L-methionine + 3 H(+). Its pathway is cofactor biosynthesis; thiamine diphosphate biosynthesis. Functionally, catalyzes the synthesis of the hydroxymethylpyrimidine phosphate (HMP-P) moiety of thiamine from aminoimidazole ribotide (AIR) in a radical S-adenosyl-L-methionine (SAM)-dependent reaction. The chain is Phosphomethylpyrimidine synthase from Microcystis aeruginosa (strain NIES-843 / IAM M-2473).